Reading from the N-terminus, the 680-residue chain is DNA-directed RNA polymerase subunit beta' (680 aa).

The Zn(2+) site is built by cysteine 69, cysteine 71, cysteine 87, and cysteine 90. The Mg(2+) site is built by aspartate 489, aspartate 491, and aspartate 493.

This sequence belongs to the RNA polymerase beta' chain family. RpoC1 subfamily. As to quaternary structure, in plastids the minimal PEP RNA polymerase catalytic core is composed of four subunits: alpha, beta, beta', and beta''. When a (nuclear-encoded) sigma factor is associated with the core the holoenzyme is formed, which can initiate transcription. Requires Mg(2+) as cofactor. The cofactor is Zn(2+).

The protein localises to the plastid. It localises to the chloroplast. It catalyses the reaction RNA(n) + a ribonucleoside 5'-triphosphate = RNA(n+1) + diphosphate. In terms of biological role, DNA-dependent RNA polymerase catalyzes the transcription of DNA into RNA using the four ribonucleoside triphosphates as substrates. The polypeptide is DNA-directed RNA polymerase subunit beta' (Citrus sinensis (Sweet orange)).